Reading from the N-terminus, the 304-residue chain is N-acetyl-D-glucosamine kinase (304 aa).

ATP contacts are provided by residues 4 to 11 (GFDMGGTK) and 133 to 140 (GVGGGLIV). 4 residues coordinate Zn(2+): His-157, Cys-177, Cys-179, and Cys-184.

Belongs to the ROK (NagC/XylR) family. NagK subfamily.

The catalysed reaction is N-acetyl-D-glucosamine + ATP = N-acetyl-D-glucosamine 6-phosphate + ADP + H(+). It participates in cell wall biogenesis; peptidoglycan recycling. Catalyzes the phosphorylation of N-acetyl-D-glucosamine (GlcNAc) derived from cell-wall degradation, yielding GlcNAc-6-P. In Yersinia pseudotuberculosis serotype O:1b (strain IP 31758), this protein is N-acetyl-D-glucosamine kinase.